A 648-amino-acid chain; its full sequence is MAQISLTFPDGSTREFDAGVTAGDVAASISTSLRKKAISATVGGAHYDLAWPIHADATIAIHTMQDEEQANELVRHDLAHIMARAVQEIWPETKVTIGPVIKDGWYYDFDRAEAFSPEDLGLIEKKMKEIINKRDPVRTEVWDRARAIAHYEANDEPYKVELINAIPGDEPLRMYWHGDWQDLCRGPHLQHTGQVPGDAFKLMSIAGAYWRGDSDRAMLQRIYGVAFTGKEKLKAHLTMLEEAAKRDHRKLGREMDLFHMQEEAPGQVFWHPNGWSIYTTLQDYMRRKQRAAGYQEVNTPQVVDRKLWEASGHWDKYQEHMFIVEVDEDHAREKAVNALKPMNCPCHVQIFNQGLKSYRDLPLRMAEFGSCNRYEPSGALHGIMRVRGFTQDDGHTFCREDQIEAECAAFITYLSSVYQDLGFEKFEIMFATRPEKRVGSEESWDHVEAALENAIKATGHPYTLDEGEGAFYGPKLDFKLTDAIGREWQCGTFQVDPNLPERLDATYIGQDGAKHRPYMLHRACLGSFERFIGILIENSAGKLPFWLAPRQVVVASIISDADDYVLEVVEKLQAAGVRAEADVRNEKINYKVREHSVGKVPVILAVGAREVEEKTVTLRRLGEKKTSVETLDAVTQALGREATPPDLL.

A TGS domain is found at 1–63 (MAQISLTFPD…HADATIAIHT (63 aa)). Residues 247–544 (DHRKLGREMD…LIENSAGKLP (298 aa)) form a catalytic region. 3 residues coordinate Zn(2+): Cys344, His395, and His521.

This sequence belongs to the class-II aminoacyl-tRNA synthetase family. Homodimer. The cofactor is Zn(2+).

The protein localises to the cytoplasm. The enzyme catalyses tRNA(Thr) + L-threonine + ATP = L-threonyl-tRNA(Thr) + AMP + diphosphate + H(+). In terms of biological role, catalyzes the attachment of threonine to tRNA(Thr) in a two-step reaction: L-threonine is first activated by ATP to form Thr-AMP and then transferred to the acceptor end of tRNA(Thr). Also edits incorrectly charged L-seryl-tRNA(Thr). This Roseobacter denitrificans (strain ATCC 33942 / OCh 114) (Erythrobacter sp. (strain OCh 114)) protein is Threonine--tRNA ligase.